Here is a 435-residue protein sequence, read N- to C-terminus: Sex peptide receptor (435 aa).

Topologically, residues 1-93 (MDNYTDVLYQ…PLEYAMPLYG (93 aa)) are extracellular. The helical transmembrane segment at 94 to 114 (YCMPFLLIITIISNSLIVLVL) threads the bilayer. The Cytoplasmic portion of the chain corresponds to 115–124 (SKKSMATPTN). A helical transmembrane segment spans residues 125–145 (FVLMGMAICDMLTVIFPAPGL). The Extracellular segment spans residues 146 to 168 (WYMYTFGNHYKPLHPVSMCLAYS). A helical membrane pass occupies residues 169–189 (IFNEIMPAMCHTISVWLTLAL). Residues 190–211 (AVQRYIYVCHAPMARTWCTMPR) lie on the Cytoplasmic side of the membrane. Residues 212 to 229 (VRRCTAYIALLAFLHQLP) form a helical membrane-spanning segment. Over 230–276 (RFFDRTYMPLVIEWNGSPTEVCHLETSMWVHDYIGVDLYYTSYYLFR) the chain is Extracellular. The chain crosses the membrane as a helical span at residues 277-297 (VLFVHLLPCIILVTLNILLFA). Topologically, residues 298-327 (AMRQAQERRKLLFRENRKKECKKLRETNCT) are cytoplasmic. Residues 328–348 (TLMLIVVVSVFLLAEIPIAVV) form a helical membrane-spanning segment. Residues 349–368 (TAMHIVSSLIIEFLDYGLAN) lie on the Extracellular side of the membrane. A helical transmembrane segment spans residues 369 to 389 (ICIMLTNFFLVFSYPINFGIY). Topologically, residues 390 to 435 (CGMSRQFRETFKEIFLGRLMAKKDSSTKYSIVNGARTCTNTNETVL) are cytoplasmic.

It belongs to the G-protein coupled receptor 1 family. In the female, expressed in the reproductive organs; strongly expressed in the spermathecae and the lower oviduct. No expression in the male reproductive organs. In the central nervous system of both sexes, it is expressed in the brain and ventral nerve cord (VNC); strongly expressed in the ventral regions of the suboesophageal ganglion, the cervical connective and in many nerve roots of the brain and VNC. Expressed in the s-LNvs and l-LNvs pdf neurons (at protein level).

The protein localises to the cell membrane. In terms of biological role, receptor for two functionally unrelated ligands; SP (A70A) for controlling reproductive behaviors and MIP for controlling sleep behavior. MIP-SPR pathway functions as a sleep homeostat which perceives the need for sleep and stabilizes it by providing a slow-acting inhibitory input to the fly arousal system that involve the pigment dispersing factor (pdf) neurons. SP-SPR is one of the multiple SP pathways that induce female post-mating behavioral responses (PMR) such as the suppression of mating receptivity and initiation of egg laying. The PMR switch is achieved by mediating the synaptic output of neurons such as those expressing fruitless (fru), double sex (dsx) and pickpocket (ppk). In Drosophila melanogaster (Fruit fly), this protein is Sex peptide receptor.